The chain runs to 816 residues: Sucrose synthase 1 (816 aa).

The interval 280–757 (MVFNVVIMSP…GLQRIEEKYT (478 aa)) is GT-B glycosyltransferase.

This sequence belongs to the glycosyltransferase 1 family. Plant sucrose synthase subfamily. As to quaternary structure, homotetramer or heterotetramer with SUS2. As to expression, expressed in root phloem and leaf mesophyll. Expressed in phloem tissues and aleurone layers of seeds and at lower levels in the pericarp and endosperm cells (at protein level). Predominantly expressed in elongating tissues including roots, developing leaves and internodes.

It carries out the reaction an NDP-alpha-D-glucose + D-fructose = a ribonucleoside 5'-diphosphate + sucrose + H(+). Its function is as follows. Sucrose-cleaving enzyme that provides UDP-glucose and fructose for various metabolic pathways. The chain is Sucrose synthase 1 (SUS1) from Oryza sativa subsp. japonica (Rice).